A 360-amino-acid polypeptide reads, in one-letter code: GTPase Obg (360 aa).

One can recognise an Obg domain in the interval 1–156; it reads MFVDSVEIII…KCVRLELKLI (156 aa). The OBG-type G domain maps to 157–360; the sequence is ADIGLVGFPN…LKFVLLEALP (204 aa). GTP-binding positions include 163–170, 188–192, 210–213, 279–282, and 341–343; these read GFPNAGKS, FTTLV, DIPG, NKCD, and SAL. 2 residues coordinate Mg(2+): S170 and T190.

The protein belongs to the TRAFAC class OBG-HflX-like GTPase superfamily. OBG GTPase family. Monomer. The cofactor is Mg(2+).

It is found in the cytoplasm. An essential GTPase which binds GTP, GDP and possibly (p)ppGpp with moderate affinity, with high nucleotide exchange rates and a fairly low GTP hydrolysis rate. Plays a role in control of the cell cycle, stress response, ribosome biogenesis and in those bacteria that undergo differentiation, in morphogenesis control. This is GTPase Obg from Helicobacter pylori (strain Shi470).